Here is a 530-residue protein sequence, read N- to C-terminus: Meiosis 1 arrest protein (530 aa).

The disordered stretch occupies residues 463 to 530 (LHPHWESRAP…SEWEKDPSRP (68 aa)). Positions 503 to 516 (ASKMPAASKSSSDA) are enriched in low complexity.

It is found in the cytoplasm. Functionally, required for meiosis I progression during spermatogenesis. In Homo sapiens (Human), this protein is Meiosis 1 arrest protein (M1AP).